The sequence spans 163 residues: NADH-quinone oxidoreductase subunit I (163 aa).

4Fe-4S ferredoxin-type domains lie at Leu54–Glu84 and Ile94–Ile123. Positions 64, 67, 70, 74, 103, 106, 109, and 113 each coordinate [4Fe-4S] cluster.

This sequence belongs to the complex I 23 kDa subunit family. In terms of assembly, NDH-1 is composed of 14 different subunits. Subunits NuoA, H, J, K, L, M, N constitute the membrane sector of the complex. Requires [4Fe-4S] cluster as cofactor.

Its subcellular location is the cell inner membrane. It catalyses the reaction a quinone + NADH + 5 H(+)(in) = a quinol + NAD(+) + 4 H(+)(out). NDH-1 shuttles electrons from NADH, via FMN and iron-sulfur (Fe-S) centers, to quinones in the respiratory chain. The immediate electron acceptor for the enzyme in this species is believed to be ubiquinone. Couples the redox reaction to proton translocation (for every two electrons transferred, four hydrogen ions are translocated across the cytoplasmic membrane), and thus conserves the redox energy in a proton gradient. This chain is NADH-quinone oxidoreductase subunit I, found in Ruthia magnifica subsp. Calyptogena magnifica.